A 238-amino-acid chain; its full sequence is Small heat shock protein, chloroplastic (238 aa).

The segment at 31 to 87 (APLSTGGRTRPLSVASAAQENRDNSVDVQVSQAQNAGNQQGNAVQRRPRRAGFDISP) is disordered. Residues 58 to 75 (VQVSQAQNAGNQQGNAVQ) show a composition bias toward low complexity. Residues 124 to 238 (AARARRRMPW…ERKVIDVQVQ (115 aa)) form the sHSP domain.

Belongs to the small heat shock protein (HSP20) family.

It is found in the plastid. Its subcellular location is the chloroplast. The polypeptide is Small heat shock protein, chloroplastic (HSP21) (Triticum aestivum (Wheat)).